The chain runs to 318 residues: MRLFAFLWSSVAFLSTVQAQVSQTASQTQDDSSTPTPTPPDKYVNIADALRTKTPMATPNRTIMPTRQDPRAPEPPTPEPTYLPTLSPTPAPTPDPGPWVAKWMDHDQVQPFKQPDPVTVSEKAAVKFKPQIHITNGCHPYPAVTWWGETSGGLKTKGAPSAGCKGSGWGSQVYGRSTWVKGVWAIMYSWYFPKDSPSTGLGHRHDWEHVIVWIDNPDIENPKILAVTPSAHSGYSKQVPPSADCVDGTSVKVKYESKWPINHALESTTEGGETQDLIMWNQLSENALRAMNSVTWGDANCPFCDGNFQAKLDKAWPF.

The N-terminal stretch at 1–19 is a signal peptide; sequence MRLFAFLWSSVAFLSTVQA. A compositionally biased stretch (low complexity) spans 24 to 35; that stretch reads TASQTQDDSSTP. Disordered stretches follow at residues 24–43 and 50–93; these read TASQTQDDSSTPTPTPPDKY and LRTK…PAPT. Positions 55-65 are enriched in polar residues; that stretch reads PMATPNRTIMP. Asparagine 60 carries N-linked (GlcNAc...) asparagine glycosylation. Residues 73 to 93 show a composition bias toward pro residues; it reads PEPPTPEPTYLPTLSPTPAPT. The Conserved undecapeptide motif I signature appears at 185 to 195; it reads AIMYSWYFPKD. A Hepta-peptide GHRHDWE motif II motif is present at residues 202–208; it reads GHRHDWE.

Belongs to the Necrosis inducing protein (NPP1) family.

Its subcellular location is the secreted. Secreted effector that contributes to virulence during infection by P.capsici. Induces distinct chlorosis at 3 days after inoculation of host C.annuum leaves, and all the chlorotic areas gradually turn brown and become moderately necrotic at 7 days after inoculation. Caused only small necrotic areas at 7 days after non-host N.benthamiana leaves infection. This is NLP effector protein 9 from Phytophthora capsici.